A 399-amino-acid polypeptide reads, in one-letter code: Probable aspartate/prephenate aminotransferase (399 aa).

Residues G39, W125, and N175 each coordinate L-aspartate. N6-(pyridoxal phosphate)lysine is present on K239. R375 is an L-aspartate binding site.

Belongs to the class-I pyridoxal-phosphate-dependent aminotransferase family. As to quaternary structure, homodimer. Pyridoxal 5'-phosphate serves as cofactor.

It localises to the cytoplasm. It carries out the reaction L-aspartate + 2-oxoglutarate = oxaloacetate + L-glutamate. The enzyme catalyses L-arogenate + 2-oxoglutarate = prephenate + L-glutamate. Functionally, catalyzes the reversible conversion of aspartate and 2-oxoglutarate to glutamate and oxaloacetate. Can also transaminate prephenate in the presence of glutamate. This Rickettsia bellii (strain RML369-C) protein is Probable aspartate/prephenate aminotransferase (aatA).